The chain runs to 75 residues: Translational regulator CsrA (75 aa).

It belongs to the CsrA/RsmA family. As to quaternary structure, homodimer; the beta-strands of each monomer intercalate to form a hydrophobic core, while the alpha-helices form wings that extend away from the core.

The protein resides in the cytoplasm. A translational regulator that binds mRNA to regulate translation initiation and/or mRNA stability. Usually binds in the 5'-UTR at or near the Shine-Dalgarno sequence preventing ribosome-binding, thus repressing translation. Its main target seems to be the major flagellin gene, while its function is anatagonized by FliW. This is Translational regulator CsrA from Exiguobacterium sp. (strain ATCC BAA-1283 / AT1b).